The primary structure comprises 272 residues: 3-methyl-2-oxobutanoate hydroxymethyltransferase (272 aa).

Residues Asp42 and Asp86 each coordinate Mg(2+). 3-methyl-2-oxobutanoate contacts are provided by residues 42 to 43 (DS), Asp86, and Lys116. Glu118 is a binding site for Mg(2+). The Proton acceptor role is filled by Glu185.

It belongs to the PanB family. As to quaternary structure, homodecamer; pentamer of dimers. Mg(2+) is required as a cofactor.

It localises to the cytoplasm. It carries out the reaction 3-methyl-2-oxobutanoate + (6R)-5,10-methylene-5,6,7,8-tetrahydrofolate + H2O = 2-dehydropantoate + (6S)-5,6,7,8-tetrahydrofolate. The protein operates within cofactor biosynthesis; (R)-pantothenate biosynthesis; (R)-pantoate from 3-methyl-2-oxobutanoate: step 1/2. Catalyzes the reversible reaction in which hydroxymethyl group from 5,10-methylenetetrahydrofolate is transferred onto alpha-ketoisovalerate to form ketopantoate. This chain is 3-methyl-2-oxobutanoate hydroxymethyltransferase, found in Prochlorococcus marinus (strain MIT 9313).